The chain runs to 458 residues: Phosphoglucosamine mutase (458 aa).

Residue Ser106 is the Phosphoserine intermediate of the active site. Ser106, Asp247, Asp249, and Asp251 together coordinate Mg(2+). Ser106 carries the phosphoserine modification.

Belongs to the phosphohexose mutase family. The cofactor is Mg(2+). Post-translationally, activated by phosphorylation.

The catalysed reaction is alpha-D-glucosamine 1-phosphate = D-glucosamine 6-phosphate. Catalyzes the conversion of glucosamine-6-phosphate to glucosamine-1-phosphate. This chain is Phosphoglucosamine mutase, found in Chlamydia abortus (strain DSM 27085 / S26/3) (Chlamydophila abortus).